We begin with the raw amino-acid sequence, 301 residues long: 3-methyl-2-oxobutanoate hydroxymethyltransferase (301 aa).

Polar residues predominate over residues 1 to 12 (MAPSNLPESTTP). The tract at residues 1–24 (MAPSNLPESTTPAEVPAPYGTGPA) is disordered. Mg(2+) is bound by residues aspartate 82 and aspartate 121. Residues 82-83 (DS), aspartate 121, and lysine 151 each bind 3-methyl-2-oxobutanoate. A Mg(2+)-binding site is contributed by glutamate 153. The Proton acceptor role is filled by glutamate 219.

The protein belongs to the PanB family. Homodecamer; pentamer of dimers. Requires Mg(2+) as cofactor.

It is found in the cytoplasm. The catalysed reaction is 3-methyl-2-oxobutanoate + (6R)-5,10-methylene-5,6,7,8-tetrahydrofolate + H2O = 2-dehydropantoate + (6S)-5,6,7,8-tetrahydrofolate. Its pathway is cofactor biosynthesis; (R)-pantothenate biosynthesis; (R)-pantoate from 3-methyl-2-oxobutanoate: step 1/2. Catalyzes the reversible reaction in which hydroxymethyl group from 5,10-methylenetetrahydrofolate is transferred onto alpha-ketoisovalerate to form ketopantoate. This chain is 3-methyl-2-oxobutanoate hydroxymethyltransferase, found in Paenarthrobacter aurescens (strain TC1).